Consider the following 153-residue polypeptide: Large ribosomal subunit protein uL15 (153 aa).

The disordered stretch occupies residues Met1 to Gly48.

The protein belongs to the universal ribosomal protein uL15 family. In terms of assembly, part of the 50S ribosomal subunit.

Functionally, binds to the 23S rRNA. This Dehalococcoides mccartyi (strain ATCC BAA-2266 / KCTC 15142 / 195) (Dehalococcoides ethenogenes (strain 195)) protein is Large ribosomal subunit protein uL15.